Here is a 549-residue protein sequence, read N- to C-terminus: Cytoplasmic trehalase (549 aa).

Residues Arg168, 175-176 (WD), Asn212, 221-223 (RSQ), 292-294 (RDE), and Gly324 each bind substrate. Catalysis depends on proton donor/acceptor residues Asp326 and Glu509. Glu525 provides a ligand contact to substrate.

It belongs to the glycosyl hydrolase 37 family. In terms of assembly, monomer.

It is found in the cytoplasm. It carries out the reaction alpha,alpha-trehalose + H2O = alpha-D-glucose + beta-D-glucose. It participates in glycan degradation; trehalose degradation; D-glucose from alpha,alpha-trehalose: step 1/1. Functionally, hydrolyzes trehalose to glucose. Could be involved, in cells returning to low osmolarity conditions, in the utilization of the accumulated cytoplasmic trehalose, which was synthesized in response to high osmolarity. The chain is Cytoplasmic trehalase from Salmonella typhi.